Consider the following 273-residue polypeptide: Serine acetyltransferase (273 aa).

This sequence belongs to the transferase hexapeptide repeat family. In terms of assembly, part of the cysteine synthase complex formed at a ratio of 1 copy of this protein and 2 copies of O-acetylserine sulfhydrylase (cysK). The complex reversibly dissociates in the presence of O-acetyl-L-serine in the absence of hydrogen sulfide.

Its subcellular location is the cytoplasm. It carries out the reaction L-serine + acetyl-CoA = O-acetyl-L-serine + CoA. It functions in the pathway amino-acid biosynthesis; L-cysteine biosynthesis; L-cysteine from L-serine: step 1/2. With respect to regulation, sensitive to feedback inhibition by L-cysteine. This chain is Serine acetyltransferase (cysE), found in Salmonella typhimurium (strain LT2 / SGSC1412 / ATCC 700720).